Here is a 715-residue protein sequence, read N- to C-terminus: Inducible lysine decarboxylase (715 aa).

The residue at position 367 (lysine 367) is an N6-(pyridoxal phosphate)lysine.

This sequence belongs to the Orn/Lys/Arg decarboxylase class-I family. Homodecamer. Interacts with RavA. It depends on pyridoxal 5'-phosphate as a cofactor.

Its subcellular location is the cytoplasm. The catalysed reaction is L-lysine + H(+) = cadaverine + CO2. The chain is Inducible lysine decarboxylase (cadA) from Escherichia coli O157:H7.